We begin with the raw amino-acid sequence, 283 residues long: uncharacterized protein (283 aa).

Residues 172-270 (EAIRDYIDER…ERSPSEYRRQ (99 aa)) form the HTH araC/xylS-type domain. DNA-binding regions (H-T-H motif) lie at residues 189–210 (ESVAQAFYISPNYLSHLFQKTG) and 237–260 (VKEVAHACGFVDSNYFCRLFRKNT).

This is an uncharacterized protein from Escherichia coli (strain K12).